A 269-amino-acid chain; its full sequence is uncharacterized protein (269 aa).

Q15 to H41 contacts NADP(+). S146 lines the substrate pocket. Catalysis depends on Y159, which acts as the Proton acceptor.

This sequence belongs to the short-chain dehydrogenases/reductases (SDR) family.

This is an uncharacterized protein from Escherichia coli O6:H1 (strain CFT073 / ATCC 700928 / UPEC).